The sequence spans 471 residues: 6-phosphogluconate dehydrogenase, decarboxylating (471 aa).

Residues 10–15, 33–35, 75–77, and Asn-103 each bind NADP(+); these read GLAVMG, NRT, and VKA. Substrate-binding positions include Asn-103 and 129–131; that span reads SGG. Catalysis depends on Lys-183, which acts as the Proton acceptor. 186–187 contacts substrate; the sequence is HN. Glu-190 (proton donor) is an active-site residue. Residues Tyr-191, Lys-263, Arg-290, Arg-449, and His-455 each contribute to the substrate site.

Belongs to the 6-phosphogluconate dehydrogenase family. As to quaternary structure, homodimer.

It catalyses the reaction 6-phospho-D-gluconate + NADP(+) = D-ribulose 5-phosphate + CO2 + NADPH. The protein operates within carbohydrate degradation; pentose phosphate pathway; D-ribulose 5-phosphate from D-glucose 6-phosphate (oxidative stage): step 3/3. Functionally, catalyzes the oxidative decarboxylation of 6-phosphogluconate to ribulose 5-phosphate and CO(2), with concomitant reduction of NADP to NADPH. The sequence is that of 6-phosphogluconate dehydrogenase, decarboxylating (gnd) from Synechococcus elongatus (strain ATCC 33912 / PCC 7942 / FACHB-805) (Anacystis nidulans R2).